Consider the following 141-residue polypeptide: ATP synthase epsilon chain (141 aa).

The protein belongs to the ATPase epsilon chain family. F-type ATPases have 2 components, CF(1) - the catalytic core - and CF(0) - the membrane proton channel. CF(1) has five subunits: alpha(3), beta(3), gamma(1), delta(1), epsilon(1). CF(0) has three main subunits: a, b and c.

The protein localises to the cell inner membrane. Its function is as follows. Produces ATP from ADP in the presence of a proton gradient across the membrane. The polypeptide is ATP synthase epsilon chain (Pseudomonas syringae pv. syringae (strain B728a)).